We begin with the raw amino-acid sequence, 542 residues long: Protein DETOXIFICATION 34 (542 aa).

12 helical membrane passes run 97–117, 127–147, 176–196, 204–224, 240–260, 272–292, 316–336, 344–364, 390–410, 435–455, 462–482, and 491–511; these read APIAFNILCNYGVNSFTSIFV, AVAIALSVVSNFSFGFLLGMA, ILLGTSVCLLPLYIYATPLLI, IAEISGKFTTQIIPQMFALAI, IMAWIGFFALTLHIFILYLFI, AAFDVSAWGIAIAQVVYVVGW, FASAVMLCLEIWYFMTIIVLT, IAVGSLSICMNINGWEGMLFI, VIVTVIESLVIGVVCAIVILI, LLGITMILNSLQPVISGVAVG, VAYINLFCYYAFGLPLGFLLG, and GIWIGMICGTSLQTLILLYMI.

The protein belongs to the multi antimicrobial extrusion (MATE) (TC 2.A.66.1) family.

The protein resides in the membrane. The sequence is that of Protein DETOXIFICATION 34 from Arabidopsis thaliana (Mouse-ear cress).